The chain runs to 431 residues: MFMSQIVDIRAREILDSRGNPTIEADVILESGVVGRACAPSGASTGSREALELRDGDKSRYLGKGVRTAVQNVNSSIHELLVGQSVFEQKALDEKMIAFDGTENKSKLGANATLAVSLAAAHAAAAEQKLPLFQYIANLRGQTTLTMPVPMMNILNGGAHADNTVDIQEFMIEPVGFTSFAEALRAGAEVFHSLKSVLKKQGLNTAVGDEGGFAPNLRSNEEAITVILQAIEQTGYKAGSDIMLALDCASSEFYKNGQYILEGEGNKSFTSNQFADYLAGLVKQYPIISIEDGLDESDWEGWSYLTSILGDKIQLVGDDLFVTNPKILQRGIDEKVGNSILIKYNQIGTLTETLDAIYLAKANGYTTVISHRSGETEDSTIADLAVGTAAGQIKTGSLCRSDRVSKYNQLLRIEELTKAVYRGKAEFKGLN.

Gln168 lines the (2R)-2-phosphoglycerate pocket. Residue Glu210 is the Proton donor of the active site. Mg(2+) is bound by residues Asp247, Glu291, and Asp318. (2R)-2-phosphoglycerate-binding residues include Lys343, Arg372, Ser373, and Lys394. Lys343 serves as the catalytic Proton acceptor.

This sequence belongs to the enolase family. In terms of assembly, component of the RNA degradosome, a multiprotein complex involved in RNA processing and mRNA degradation. Mg(2+) serves as cofactor.

Its subcellular location is the cytoplasm. The protein resides in the secreted. It is found in the cell surface. It catalyses the reaction (2R)-2-phosphoglycerate = phosphoenolpyruvate + H2O. Its pathway is carbohydrate degradation; glycolysis; pyruvate from D-glyceraldehyde 3-phosphate: step 4/5. In terms of biological role, catalyzes the reversible conversion of 2-phosphoglycerate (2-PG) into phosphoenolpyruvate (PEP). It is essential for the degradation of carbohydrates via glycolysis. In Acinetobacter baumannii (strain AYE), this protein is Enolase.